The chain runs to 274 residues: Large ribosomal subunit protein uL2cz/uL2cy (274 aa).

Disordered stretches follow at residues 1–25 and 224–274; these read MAIH…VKSN and NPVD…RRSK.

It belongs to the universal ribosomal protein uL2 family. In terms of assembly, part of the 50S ribosomal subunit.

It is found in the plastid. Its subcellular location is the chloroplast. This Aethionema cordifolium (Lebanon stonecress) protein is Large ribosomal subunit protein uL2cz/uL2cy (rpl2-A).